A 664-amino-acid chain; its full sequence is Probable LRR receptor-like serine/threonine-protein kinase At1g63430 (664 aa).

The first 22 residues, 1-22, serve as a signal peptide directing secretion; the sequence is MRSKYFCSLALVLGLFFVSCDG. At 23-288 the chain is on the extracellular side; it reads FASNEVQALR…KHHRASKPKW (266 aa). Asn-75 carries N-linked (GlcNAc...) asparagine glycosylation. LRR repeat units lie at residues 94-116, 118-140, 142-165, and 166-178; these read YLQE…IGNL, NLKI…IGSL, GIMI…GNLK, and YLRE…NRLQ. An N-linked (GlcNAc...) asparagine glycan is attached at Asn-197. A helical membrane pass occupies residues 289-309; the sequence is LLALEIVTGSMVGLLLLVALF. The Cytoplasmic segment spans residues 310–664; it reads SAVHRWNNRS…LAWAELALDS (355 aa). The 283-residue stretch at 360 to 642 folds into the Protein kinase domain; that stretch reads EDFSNIIGLS…ELCETLESRI (283 aa).

This sequence belongs to the protein kinase superfamily. Ser/Thr protein kinase family.

The protein resides in the cell membrane. It catalyses the reaction L-seryl-[protein] + ATP = O-phospho-L-seryl-[protein] + ADP + H(+). It carries out the reaction L-threonyl-[protein] + ATP = O-phospho-L-threonyl-[protein] + ADP + H(+). In Arabidopsis thaliana (Mouse-ear cress), this protein is Probable LRR receptor-like serine/threonine-protein kinase At1g63430.